A 104-amino-acid polypeptide reads, in one-letter code: MAIQGIEGVLQQLQATAIQAGQMDRGAAAPGVSFASELKTAIGKISDTQQAARKQAQDFEIGVPGISLNDVLVDLQKSSISLQMGVQVRNKLVSAYQEVMNMAV.

Belongs to the FliE family.

The protein localises to the bacterial flagellum basal body. This is Flagellar hook-basal body complex protein FliE from Serratia proteamaculans (strain 568).